Reading from the N-terminus, the 30-residue chain is Cycloviolacin-O5 (30 aa).

A cross-link (cyclopeptide (Gly-Asn)) is located at residues 1–30; sequence GTPCGESCVWIPCISSAVGCSCKNKVCYKN. Disulfide bonds link cysteine 4/cysteine 20, cysteine 8/cysteine 22, and cysteine 13/cysteine 27.

In terms of processing, this is a cyclic peptide.

Probably participates in a plant defense mechanism. The polypeptide is Cycloviolacin-O5 (Viola odorata (Sweet violet)).